The chain runs to 420 residues: Gamma-glutamyl phosphate reductase (420 aa).

It belongs to the gamma-glutamyl phosphate reductase family.

The protein localises to the cytoplasm. It carries out the reaction L-glutamate 5-semialdehyde + phosphate + NADP(+) = L-glutamyl 5-phosphate + NADPH + H(+). Its pathway is amino-acid biosynthesis; L-proline biosynthesis; L-glutamate 5-semialdehyde from L-glutamate: step 2/2. In terms of biological role, catalyzes the NADPH-dependent reduction of L-glutamate 5-phosphate into L-glutamate 5-semialdehyde and phosphate. The product spontaneously undergoes cyclization to form 1-pyrroline-5-carboxylate. The protein is Gamma-glutamyl phosphate reductase of Neisseria gonorrhoeae (strain ATCC 700825 / FA 1090).